The primary structure comprises 233 residues: Pyridoxine 5'-phosphate synthase (233 aa).

Asn6 is a binding site for 3-amino-2-oxopropyl phosphate. 8 to 9 (DH) lines the 1-deoxy-D-xylulose 5-phosphate pocket. Arg17 provides a ligand contact to 3-amino-2-oxopropyl phosphate. Catalysis depends on His42, which acts as the Proton acceptor. 1-deoxy-D-xylulose 5-phosphate contacts are provided by Arg44 and His49. Residue Glu69 is the Proton acceptor of the active site. Thr99 is a binding site for 1-deoxy-D-xylulose 5-phosphate. His186 acts as the Proton donor in catalysis. 3-amino-2-oxopropyl phosphate is bound by residues Gly187 and 208–209 (GH).

This sequence belongs to the PNP synthase family. As to quaternary structure, homooctamer; tetramer of dimers.

The protein localises to the cytoplasm. The catalysed reaction is 3-amino-2-oxopropyl phosphate + 1-deoxy-D-xylulose 5-phosphate = pyridoxine 5'-phosphate + phosphate + 2 H2O + H(+). It participates in cofactor biosynthesis; pyridoxine 5'-phosphate biosynthesis; pyridoxine 5'-phosphate from D-erythrose 4-phosphate: step 5/5. Functionally, catalyzes the complicated ring closure reaction between the two acyclic compounds 1-deoxy-D-xylulose-5-phosphate (DXP) and 3-amino-2-oxopropyl phosphate (1-amino-acetone-3-phosphate or AAP) to form pyridoxine 5'-phosphate (PNP) and inorganic phosphate. This is Pyridoxine 5'-phosphate synthase from Anaplasma phagocytophilum (strain HZ).